The chain runs to 72 residues: Small ribosomal subunit protein bS18c (72 aa).

The protein belongs to the bacterial ribosomal protein bS18 family. As to quaternary structure, part of the 30S ribosomal subunit.

It localises to the plastid. The protein localises to the chloroplast. This is Small ribosomal subunit protein bS18c from Emiliania huxleyi (Coccolithophore).